Consider the following 213-residue polypeptide: GTP cyclohydrolase 1 (213 aa).

Positions 104, 107, and 175 each coordinate Zn(2+).

Belongs to the GTP cyclohydrolase I family. In terms of assembly, toroid-shaped homodecamer, composed of two pentamers of five dimers.

It carries out the reaction GTP + H2O = 7,8-dihydroneopterin 3'-triphosphate + formate + H(+). It functions in the pathway cofactor biosynthesis; 7,8-dihydroneopterin triphosphate biosynthesis; 7,8-dihydroneopterin triphosphate from GTP: step 1/1. The sequence is that of GTP cyclohydrolase 1 from Brucella anthropi (strain ATCC 49188 / DSM 6882 / CCUG 24695 / JCM 21032 / LMG 3331 / NBRC 15819 / NCTC 12168 / Alc 37) (Ochrobactrum anthropi).